The chain runs to 392 residues: Protein trapped in endoderm-1 (392 aa).

The Extracellular portion of the chain corresponds to 1–39; it reads MDQDMGMATGYFQDADMQMDEPAAATQSIYPHSATLFAA. The chain crosses the membrane as a helical span at residues 40–60; the sequence is ISACVFVTIGVLGNLITLLAL. The Cytoplasmic segment spans residues 61-73; the sequence is LKSPTIREHATTA. A helical transmembrane segment spans residues 74–94; that stretch reads FVISLSISDLLFCSFSLPLTA. Over 95–110 the chain is Extracellular; sequence VRFFQESWTFGTTLCK. Residues 111 to 131 traverse the membrane as a helical segment; that stretch reads IFPVIFYGNVAVSLLSMVGIT. Topologically, residues 132 to 156 are cytoplasmic; sequence LNRYILIACHSRYSQIYKPKFITLQ. A helical membrane pass occupies residues 157–177; it reads LLFVWAVSFLLLLPPILGIWG. Over 178 to 202 the chain is Extracellular; it reads EMGLDEATFSCTILKKEGRSIKKTL. Residues 203-223 traverse the membrane as a helical segment; that stretch reads FVIGFLLPCLVIIVSYSCIYI. The Cytoplasmic portion of the chain corresponds to 224 to 268; sequence TVLHQKKKIRNHDNFQIAAAKGSSSSGGGSYMTTTCTRKAREDNR. Residues 269–289 form a helical membrane-spanning segment; sequence LTVMMVTIFLCFLVCFLPLML. Residues 290-302 lie on the Extracellular side of the membrane; it reads ANVVDDERNTSYP. Asn298 carries N-linked (GlcNAc...) asparagine glycosylation. Residues 303–323 form a helical membrane-spanning segment; it reads WLHIIASVMAWASSVINPIIY. The Cytoplasmic portion of the chain corresponds to 324–392; it reads AASNRNYRVA…INQMCQTYSV (69 aa). 3 positions are modified to phosphoserine: Ser359, Ser362, and Ser366. Thr372 bears the Phosphothreonine mark.

This sequence belongs to the G-protein coupled receptor 1 family. As to expression, in embryos, expression is seen at highest levels in the cuprophilic cells and at lower levels in the amnioserosa, developing CNS, cardiac mesoderm primordium and midline glia.

It is found in the cell membrane. Essential for the first active step of germ cell migration: transepithelial migration of germ cells through the posterior midgut (PMG) epithelium. In Drosophila melanogaster (Fruit fly), this protein is Protein trapped in endoderm-1 (Tre1).